The chain runs to 259 residues: Probable ATP-dependent transporter ycf16 (259 aa).

In terms of domain architecture, ABC transporter spans 9–253 (LEVKNLKAQV…EIKGYDWLNE (245 aa)). Residue 41-48 (GPNGSGKS) coordinates ATP.

The protein belongs to the ABC transporter superfamily. Ycf16 family.

It is found in the plastid. Its subcellular location is the cyanelle. The polypeptide is Probable ATP-dependent transporter ycf16 (ycf16) (Cyanophora paradoxa).